The sequence spans 120 residues: uncharacterized protein (120 aa).

Its subcellular location is the cytoplasm. It is found in the nucleus. This is an uncharacterized protein from Schizosaccharomyces pombe (strain 972 / ATCC 24843) (Fission yeast).